A 407-amino-acid chain; its full sequence is UDP-N-acetyl-D-mannosamine dehydrogenase (407 aa).

The protein belongs to the UDP-glucose/GDP-mannose dehydrogenase family.

The enzyme catalyses UDP-N-acetyl-alpha-D-mannosamine + 2 NAD(+) + H2O = UDP-N-acetyl-alpha-D-mannosaminouronate + 2 NADH + 3 H(+). Its pathway is capsule biogenesis; capsule polysaccharide biosynthesis. Its function is as follows. Dehydrogenase involved in the biosynthesis of capsular polysaccharides. Catalyzes the NAD(+)-dependent oxidation of UDP-N-acetyl-D-mannosamine (UDP-ManNAc) to UDP-N-acetyl-D-mannosaminuronic acid (UDP-ManNAcA). This Campylobacter jejuni protein is UDP-N-acetyl-D-mannosamine dehydrogenase.